Consider the following 885-residue polypeptide: Leucine--tRNA ligase (885 aa).

A 'HIGH' region motif is present at residues 48 to 58; the sequence is PYPSGKLHMGH. The short motif at 639-643 is the 'KMSKS' region element; it reads TMSKS. Residue lysine 642 coordinates ATP.

This sequence belongs to the class-I aminoacyl-tRNA synthetase family.

The protein resides in the cytoplasm. The enzyme catalyses tRNA(Leu) + L-leucine + ATP = L-leucyl-tRNA(Leu) + AMP + diphosphate. The sequence is that of Leucine--tRNA ligase from Bordetella avium (strain 197N).